Reading from the N-terminus, the 572-residue chain is Sulfate adenylyltransferase (572 aa).

Residues 1 to 169 (MANAPHGGVL…IEAVNKLNHY (169 aa)) form an N-terminal region. The interval 170 to 393 (DYVALRYTPA…LRESNPPRAT (224 aa)) is catalytic. Sulfate is bound at residue glutamine 197. Residues 197-200 (QTRN) and 291-294 (GRDH) each bind ATP. Active-site residues include threonine 198, arginine 199, and asparagine 200. Residue arginine 199 participates in sulfate binding. Alanine 295 is a binding site for sulfate. Residue valine 333 participates in ATP binding. The tract at residues 394–572 (QGFTIFLTGY…LESQGFLERQ (179 aa)) is allosteric regulation domain; adenylyl-sulfate kinase-like. 3'-phosphoadenylyl sulfate is bound by residues 433–436 (DTVR), arginine 450, 476–477 (IA), and arginine 514.

It in the N-terminal section; belongs to the sulfate adenylyltransferase family. The protein in the C-terminal section; belongs to the APS kinase family. In terms of assembly, homohexamer. Dimer of trimers.

Its subcellular location is the cytoplasm. The enzyme catalyses sulfate + ATP + H(+) = adenosine 5'-phosphosulfate + diphosphate. It participates in sulfur metabolism; hydrogen sulfide biosynthesis; sulfite from sulfate: step 1/3. Its activity is regulated as follows. Allosterically inhibited by 3'-phosphoadenosine 5'-phosphosulfate (PAPS). Its function is as follows. Catalyzes the first intracellular reaction of sulfate assimilation, forming adenosine-5'-phosphosulfate (APS) from inorganic sulfate and ATP. Plays an important role in sulfate activation as a component of the biosynthesis pathway of sulfur-containing amino acids. This Penicillium chrysogenum (Penicillium notatum) protein is Sulfate adenylyltransferase.